The primary structure comprises 378 residues: Protein SLG1 (378 aa).

The first 21 residues, Met1 to Ala21, serve as a signal peptide directing secretion. One can recognise a WSC domain in the interval Tyr22–Asp110. The Extracellular portion of the chain corresponds to Tyr22–Ala264. Asn65 carries N-linked (GlcNAc...) asparagine glycosylation. Disordered stretches follow at residues Ser115 to Thr201 and Gln236 to His256. The segment covering Gln236 to Ser253 has biased composition (low complexity). Residues Ile265–Leu285 form a helical membrane-spanning segment. The Cytoplasmic portion of the chain corresponds to Ile286–Asp378. The tract at residues Ala318 to Asp378 is disordered. Positions Ser319–Ser331 are enriched in low complexity. A phosphoserine mark is found at Ser331 and Ser353.

Glycosylated. Phosphorylated. Phosphorylation serves a negative regulatory role.

The protein localises to the cell membrane. In terms of biological role, plays a role during G1 to regulate entering or exiting the cell cycle. Involved in stress responses. Has a role in cell wall integrity signaling. Activates ROM1 or ROM2 catalyzed guanine nucleotide exchange toward RHO1. Important regulator of the actin cytoskeleton rearrangements in conditions of cell wall expansion and membrane stretching. Specifically required for the actin reorganization induced by hypo-osmotic shock. Multicopy suppressor of 1,3-beta-glucan synthase (GS). Activates GS upstream of RHO1. Acts positively on the PKC1-MAPK pathway. Activates transiently SLT2 during alkaline stress, which leads to an increase in the expression of several specific genes. This is Protein SLG1 (SLG1) from Saccharomyces cerevisiae (strain ATCC 204508 / S288c) (Baker's yeast).